We begin with the raw amino-acid sequence, 466 residues long: Asparagine--tRNA ligase (466 aa).

It belongs to the class-II aminoacyl-tRNA synthetase family. As to quaternary structure, homodimer.

Its subcellular location is the cytoplasm. The enzyme catalyses tRNA(Asn) + L-asparagine + ATP = L-asparaginyl-tRNA(Asn) + AMP + diphosphate + H(+). The polypeptide is Asparagine--tRNA ligase (Shewanella amazonensis (strain ATCC BAA-1098 / SB2B)).